Here is a 234-residue protein sequence, read N- to C-terminus: uncharacterized protein (234 aa).

The disordered stretch occupies residues 65–89 (QNANRQEGRRRGLRPSSDGNLRREN). An RING-type zinc finger spans residues 185-220 (CAVCLHNKVCVLFQKCKHVITCGPCSLRIKECPVCK).

Belongs to the IIV-6 175R/332L family.

This is an uncharacterized protein from Acheta domesticus (House cricket).